The primary structure comprises 109 residues: Thiosulfate sulfurtransferase GlpE (109 aa).

A Rhodanese domain is found at 17–105 (KEGKTALVDI…WARSYPQDIT (89 aa)). The active-site Cysteine persulfide intermediate is Cys-65.

The protein belongs to the GlpE family.

Its subcellular location is the cytoplasm. It catalyses the reaction thiosulfate + hydrogen cyanide = thiocyanate + sulfite + 2 H(+). The enzyme catalyses thiosulfate + [thioredoxin]-dithiol = [thioredoxin]-disulfide + hydrogen sulfide + sulfite + 2 H(+). Transferase that catalyzes the transfer of sulfur from thiosulfate to thiophilic acceptors such as cyanide or dithiols. May function in a CysM-independent thiosulfate assimilation pathway by catalyzing the conversion of thiosulfate to sulfite, which can then be used for L-cysteine biosynthesis. In Yersinia pestis bv. Antiqua (strain Antiqua), this protein is Thiosulfate sulfurtransferase GlpE.